Reading from the N-terminus, the 228-residue chain is Phosphoribosylformylglycinamidine synthase subunit PurQ (228 aa).

The Glutamine amidotransferase type-1 domain maps to 2 to 225; the sequence is KAAVISFPGS…INQTEGADVR (224 aa). Cys86 acts as the Nucleophile in catalysis. Catalysis depends on residues His194 and Glu196.

As to quaternary structure, part of the FGAM synthase complex composed of 1 PurL, 1 PurQ and 2 PurS subunits.

Its subcellular location is the cytoplasm. The catalysed reaction is N(2)-formyl-N(1)-(5-phospho-beta-D-ribosyl)glycinamide + L-glutamine + ATP + H2O = 2-formamido-N(1)-(5-O-phospho-beta-D-ribosyl)acetamidine + L-glutamate + ADP + phosphate + H(+). It carries out the reaction L-glutamine + H2O = L-glutamate + NH4(+). The protein operates within purine metabolism; IMP biosynthesis via de novo pathway; 5-amino-1-(5-phospho-D-ribosyl)imidazole from N(2)-formyl-N(1)-(5-phospho-D-ribosyl)glycinamide: step 1/2. In terms of biological role, part of the phosphoribosylformylglycinamidine synthase complex involved in the purines biosynthetic pathway. Catalyzes the ATP-dependent conversion of formylglycinamide ribonucleotide (FGAR) and glutamine to yield formylglycinamidine ribonucleotide (FGAM) and glutamate. The FGAM synthase complex is composed of three subunits. PurQ produces an ammonia molecule by converting glutamine to glutamate. PurL transfers the ammonia molecule to FGAR to form FGAM in an ATP-dependent manner. PurS interacts with PurQ and PurL and is thought to assist in the transfer of the ammonia molecule from PurQ to PurL. The polypeptide is Phosphoribosylformylglycinamidine synthase subunit PurQ (Lacticaseibacillus casei (strain BL23) (Lactobacillus casei)).